A 170-amino-acid chain; its full sequence is Ubiquitin-conjugating enzyme E2 G1 (170 aa).

Residue methionine 1 is modified to N-acetylmethionine. Threonine 2 carries the N-acetylthreonine; in Ubiquitin-conjugating enzyme E2 G1, N-terminally processed modification. The UBC core domain occupies 5–166; sequence QSALLLRRQL…VARCVRKSQE (162 aa). Cysteine 90 (glycyl thioester intermediate) is an active-site residue.

Belongs to the ubiquitin-conjugating enzyme family. Post-translationally, autoubiquitinated.

The catalysed reaction is S-ubiquitinyl-[E1 ubiquitin-activating enzyme]-L-cysteine + [E2 ubiquitin-conjugating enzyme]-L-cysteine = [E1 ubiquitin-activating enzyme]-L-cysteine + S-ubiquitinyl-[E2 ubiquitin-conjugating enzyme]-L-cysteine.. It functions in the pathway protein modification; protein ubiquitination. Functionally, accepts ubiquitin from the E1 complex and catalyzes its covalent attachment to other proteins. In vitro catalyzes 'Lys-48'-, as well as 'Lys-63'-linked polyubiquitination. May be involved in degradation of muscle-specific proteins. Mediates polyubiquitination of CYP3A4. The polypeptide is Ubiquitin-conjugating enzyme E2 G1 (UBE2G1) (Macaca fascicularis (Crab-eating macaque)).